A 440-amino-acid chain; its full sequence is Thymidine phosphorylase (440 aa).

Belongs to the thymidine/pyrimidine-nucleoside phosphorylase family. Homodimer.

It carries out the reaction thymidine + phosphate = 2-deoxy-alpha-D-ribose 1-phosphate + thymine. It participates in pyrimidine metabolism; dTMP biosynthesis via salvage pathway; dTMP from thymine: step 1/2. In terms of biological role, the enzymes which catalyze the reversible phosphorolysis of pyrimidine nucleosides are involved in the degradation of these compounds and in their utilization as carbon and energy sources, or in the rescue of pyrimidine bases for nucleotide synthesis. The polypeptide is Thymidine phosphorylase (Escherichia coli (strain 55989 / EAEC)).